The sequence spans 274 residues: Penicillin-insensitive murein endopeptidase (274 aa).

Positions M1–A19 are cleaved as a signal peptide. Disulfide bonds link C44/C265, C187/C235, and C216/C223. Zn(2+) is bound by residues H110, H113, D120, D147, H150, and H211. A disordered region spans residues E224–P263. Residues P245–P263 show a composition bias toward pro residues.

This sequence belongs to the peptidase M74 family. Dimer. Zn(2+) serves as cofactor.

The protein resides in the periplasm. Its function is as follows. Murein endopeptidase that cleaves the D-alanyl-meso-2,6-diamino-pimelyl amide bond that connects peptidoglycan strands. Likely plays a role in the removal of murein from the sacculus. The sequence is that of Penicillin-insensitive murein endopeptidase from Klebsiella pneumoniae (strain 342).